The chain runs to 314 residues: Ficolin-2 (314 aa).

A signal peptide spans 1–17 (MALGSAALFVLTLTVHA). One can recognise a Collagen-like domain in the interval 40 to 96 (GCPGLPGAAGPKGEAGAKGDRGESGLPGIPGKEGPTGPKGNQGEKGIRGEKGDSGPS). A disordered region spans residues 49–101 (GPKGEAGAKGDRGESGLPGIPGKEGPTGPKGNQGEKGIRGEKGDSGPSQSCAT). The region spanning 97 to 314 (QSCATGPRTC…KVSEMKVRLI (218 aa)) is the Fibrinogen C-terminal domain. 2 cysteine pairs are disulfide-bonded: C99–C127 and C106–C134. Positions 250, 252, 254, and 256 each coordinate Ca(2+). C258 and C271 are joined by a disulfide. N-linked (GlcNAc...) asparagine glycosylation occurs at N301.

It belongs to the ficolin lectin family. As to quaternary structure, homotrimer. Interacts with elastin. Interacts with MASP1 and MASP2.

Its subcellular location is the secreted. In terms of biological role, may function in innate immunity through activation of the lectin complement pathway. Calcium-dependent and GlcNAc-binding lectin. This is Ficolin-2 (Fcn2) from Mus musculus (Mouse).